The primary structure comprises 498 residues: ATP synthase subunit beta, chloroplastic (498 aa).

172 to 179 (GGAGVGKT) contributes to the ATP binding site.

This sequence belongs to the ATPase alpha/beta chains family. In terms of assembly, F-type ATPases have 2 components, CF(1) - the catalytic core - and CF(0) - the membrane proton channel. CF(1) has five subunits: alpha(3), beta(3), gamma(1), delta(1), epsilon(1). CF(0) has four main subunits: a(1), b(1), b'(1) and c(9-12).

It is found in the plastid. It localises to the chloroplast thylakoid membrane. It catalyses the reaction ATP + H2O + 4 H(+)(in) = ADP + phosphate + 5 H(+)(out). Functionally, produces ATP from ADP in the presence of a proton gradient across the membrane. The catalytic sites are hosted primarily by the beta subunits. This Triticum aestivum (Wheat) protein is ATP synthase subunit beta, chloroplastic.